Consider the following 425-residue polypeptide: MLDLKRIRTNFDAVAAKLKTRGVSEDTLTTLKALDEQRRALLVQTEELKAQRNIASAAIAQAKRQKKDASQQIADMQQLAANIKAIDAKLADIDQEITSIITVLPNTPHDSVPIGADEEDNVEIRRWGKPRQFDFDIKAHWDLGEALDILDWERGAKVTGARFLFYKNLGARLERALYNFMLDEHLKEGYQEIIPPYMVNHDSMFGTGQYPKFKEDTFELDGTSFVLIPTAEVPLTNYYRGDIIDGKELPIYFTAMSPSFRSEAGSAGRDTRGLIRLHQFHKVEMVKFAKPETSYEELEKMTANAENILQKLELPYRVLALCTGDMGFSAAKTYDLEVWIPAQNTYREISSCSNTEDFQARRAQIRYRDEADGKVKLLHTLNGSGLAVGRTVAAILENYQNEDGSVTIPEVLRPYMGGLELIKPR.

An L-serine-binding site is contributed by 230–232 (TAE). Residue 261–263 (RSE) coordinates ATP. An L-serine-binding site is contributed by Glu-284. ATP is bound at residue 348–351 (EISS). Ser-384 serves as a coordination point for L-serine.

This sequence belongs to the class-II aminoacyl-tRNA synthetase family. Type-1 seryl-tRNA synthetase subfamily. In terms of assembly, homodimer. The tRNA molecule binds across the dimer.

The protein resides in the cytoplasm. It catalyses the reaction tRNA(Ser) + L-serine + ATP = L-seryl-tRNA(Ser) + AMP + diphosphate + H(+). The catalysed reaction is tRNA(Sec) + L-serine + ATP = L-seryl-tRNA(Sec) + AMP + diphosphate + H(+). Its pathway is aminoacyl-tRNA biosynthesis; selenocysteinyl-tRNA(Sec) biosynthesis; L-seryl-tRNA(Sec) from L-serine and tRNA(Sec): step 1/1. Its function is as follows. Catalyzes the attachment of serine to tRNA(Ser). Is also able to aminoacylate tRNA(Sec) with serine, to form the misacylated tRNA L-seryl-tRNA(Sec), which will be further converted into selenocysteinyl-tRNA(Sec). The chain is Serine--tRNA ligase from Streptococcus equi subsp. zooepidemicus (strain H70).